Consider the following 275-residue polypeptide: Glucosamine-6-phosphate deaminase 2 (275 aa).

Residue D72 is the Proton acceptor; for enolization step of the active site. Residues 103–131 (NAHILDGNASDLQAECEDFERKIKEAGGI) adopt a coiled-coil conformation. D141 acts as the For ring-opening step in catalysis. The active-site Proton acceptor; for ring-opening step is the H143. E148 acts as the For ring-opening step in catalysis.

This sequence belongs to the glucosamine/galactosamine-6-phosphate isomerase family. As to quaternary structure, homohexamer.

The protein localises to the cytoplasm. The catalysed reaction is alpha-D-glucosamine 6-phosphate + H2O = beta-D-fructose 6-phosphate + NH4(+). Its function is as follows. Catalyzes the reversible conversion of alpha-D-glucosamine 6-phosphate (GlcN-6P) into beta-D-fructose 6-phosphate (Fru-6P) and ammonium ion, a regulatory reaction step in de novo uridine diphosphate-N-acetyl-alpha-D-glucosamine (UDP-GlcNAc) biosynthesis via hexosamine pathway. The protein is Glucosamine-6-phosphate deaminase 2 of Xenopus tropicalis (Western clawed frog).